Consider the following 211-residue polypeptide: Potassium-transporting ATPase KdpC subunit (211 aa).

Residues 13–35 (VVTMVLTGLLYPLAVTGLAQLLF) form a helical membrane-spanning segment.

The protein belongs to the KdpC family. In terms of assembly, the system is composed of three essential subunits: KdpA, KdpB and KdpC.

The protein localises to the cell membrane. In terms of biological role, part of the high-affinity ATP-driven potassium transport (or Kdp) system, which catalyzes the hydrolysis of ATP coupled with the electrogenic transport of potassium into the cytoplasm. This subunit acts as a catalytic chaperone that increases the ATP-binding affinity of the ATP-hydrolyzing subunit KdpB by the formation of a transient KdpB/KdpC/ATP ternary complex. The polypeptide is Potassium-transporting ATPase KdpC subunit (Myxococcus xanthus).